Reading from the N-terminus, the 314-residue chain is Deacetoxycephalosporin C synthase (314 aa).

Positions 156–269 (DCEPLLRLRY…RTSSVFFLRP (114 aa)) constitute a Fe2OG dioxygenase domain.

Belongs to the iron/ascorbate-dependent oxidoreductase family. Fe cation serves as cofactor. The cofactor is L-ascorbate.

It carries out the reaction penicillin N + 2-oxoglutarate + O2 = deacetoxycephalosporin C + succinate + CO2 + H2O. It participates in antibiotic biosynthesis; cephalosporin C biosynthesis. Its function is as follows. Catalyzes the step from penicillin N to deacetoxy-cephalosporin C. This Amycolatopsis lactamdurans (Nocardia lactamdurans) protein is Deacetoxycephalosporin C synthase (cefE).